The chain runs to 456 residues: GTP cyclohydrolase 1 (456 aa).

Cysteine 340, histidine 343, and cysteine 412 together coordinate Zn(2+).

Belongs to the GTP cyclohydrolase I family. As to quaternary structure, homodimer. Expressed in leaves and unripe fruits.

The enzyme catalyses GTP + H2O = 7,8-dihydroneopterin 3'-triphosphate + formate + H(+). It participates in cofactor biosynthesis; 7,8-dihydroneopterin triphosphate biosynthesis; 7,8-dihydroneopterin triphosphate from GTP: step 1/1. Functionally, GTP cyclohydrolase 1 is the first enzyme in the biosynthetic pathway leading to folic acid. This chain is GTP cyclohydrolase 1 (GCH1), found in Solanum lycopersicum (Tomato).